A 212-amino-acid polypeptide reads, in one-letter code: Golgi SNAP receptor complex member 2 (212 aa).

Position 1 is an N-acetylmethionine (methionine 1). Residues 1–190 (MDPLFQQTHK…LIEKRAFQDK (190 aa)) are Cytoplasmic-facing. The stretch at 61–107 (NKRQNARLRVDQLKYDVQHLQTALRNFQHRRHAREQQERQREELLSR) forms a coiled coil. Residues 118–120 (IPM) carry the IxM motif; signal for cargo packaging into COPII-coated vesicles motif. The helical; Anchor for type IV membrane protein transmembrane segment at 191–211 (YFMIGGMLLTCVVMFLVVQYL) threads the bilayer. Position 212 (threonine 212) is a topological domain, vesicular.

It belongs to the GOSR2 family. Part of a unique SNARE complex composed of the Golgi SNAREs GOSR1, STX5 and YKT6. Interacts (via IxM motif) with SEC24C and SEC24D; mediates GOSR2 packaging into COPII-coated vesicles. Interacts with BET1.

Its subcellular location is the golgi apparatus. It is found in the cis-Golgi network membrane. The protein localises to the golgi apparatus membrane. The protein resides in the endoplasmic reticulum membrane. Its function is as follows. Involved in transport of proteins from the cis/medial-Golgi to the trans-Golgi network. The chain is Golgi SNAP receptor complex member 2 (GOSR2) from Homo sapiens (Human).